A 105-amino-acid chain; its full sequence is MFAVIKAGGKQYKVDRNSVIKVEKIDGELGSKIQFDQILMIGEYSKPSFIGTPIVKGAIVTAEITNQLKDNKIIAFKKKRRKNYRRKAGHRQELTELKILDITKQ.

This sequence belongs to the bacterial ribosomal protein bL21 family. As to quaternary structure, part of the 50S ribosomal subunit. Contacts protein L20.

Its function is as follows. This protein binds to 23S rRNA in the presence of protein L20. This Rickettsia prowazekii (strain Madrid E) protein is Large ribosomal subunit protein bL21.